The primary structure comprises 238 residues: Ribosomal RNA small subunit methyltransferase G (238 aa).

S-adenosyl-L-methionine contacts are provided by residues G77, F82, 128–129 (AE), and R147.

This sequence belongs to the methyltransferase superfamily. RNA methyltransferase RsmG family.

Its subcellular location is the cytoplasm. Functionally, specifically methylates the N7 position of guanine in position 535 of 16S rRNA. The sequence is that of Ribosomal RNA small subunit methyltransferase G from Listeria monocytogenes serotype 4b (strain CLIP80459).